Reading from the N-terminus, the 152-residue chain is Ubiquitin-conjugating enzyme E2 2 (152 aa).

One can recognise a UBC core domain in the interval 4–150 (PARKRLMRDF…VREVVEQSWT (147 aa)). Residue cysteine 88 is the Glycyl thioester intermediate of the active site.

It belongs to the ubiquitin-conjugating enzyme family. Expressed in all tissues examined. Lower levels found in leaves.

It catalyses the reaction S-ubiquitinyl-[E1 ubiquitin-activating enzyme]-L-cysteine + [E2 ubiquitin-conjugating enzyme]-L-cysteine = [E1 ubiquitin-activating enzyme]-L-cysteine + S-ubiquitinyl-[E2 ubiquitin-conjugating enzyme]-L-cysteine.. Its pathway is protein modification; protein ubiquitination. Its function is as follows. Accepts the ubiquitin from the E1 complex and catalyzes its covalent attachment to other proteins. This is Ubiquitin-conjugating enzyme E2 2 (UBC2) from Arabidopsis thaliana (Mouse-ear cress).